Reading from the N-terminus, the 104-residue chain is MFASTVFVSLLAVAAAVPTNPQGQSCGNGNTVHCCNAETANKLTKGGILGALDLSNLLGQCNDVTAAVAGGAVPIKNTCSSQAVCCGEIHQNGLVNLGCTPIFV.

Positions 1-16 are cleaved as a signal peptide; it reads MFASTVFVSLLAVAAA. Intrachain disulfides connect Cys-26-Cys-85, Cys-34-Cys-79, Cys-35-Cys-61, and Cys-86-Cys-99.

It belongs to the fungal hydrophobin family. Self-assembles to form functional amyloid fibrils called rodlets. Self-assembly into fibrillar rodlets occurs spontaneously at hydrophobic:hydrophilic interfaces and the rodlets further associate laterally to form amphipathic monolayers.

Its subcellular location is the secreted. The protein resides in the cell wall. Aerial growth, conidiation, and dispersal of filamentous fungi in the environment rely upon a capability of their secreting small amphipathic proteins called hydrophobins (HPBs) with low sequence identity. Class I can self-assemble into an outermost layer of rodlet bundles on aerial cell surfaces, conferring cellular hydrophobicity that supports fungal growth, development and dispersal; whereas Class II form highly ordered films at water-air interfaces through intermolecular interactions but contribute nothing to the rodlet structure. HYD4 is a class I hydrophobin that negatively regulates aerial mycelial growth, conidiation, carotenoid and adenosine synthesis, resistance to oxidant stress, and fruiting body development. Seems not to be involved in the mycelial growth rate, the hydrophobicity of the mycelia and conidia, nor the conidial virulence on silkworm pupae. This Cordyceps militaris (Caterpillar fungus) protein is Class I hydrophobin 4.